Here is an 84-residue protein sequence, read N- to C-terminus: Cell division protein CrgA (84 aa).

The next 2 membrane-spanning stretches (helical) occupy residues 31–51 (VAPVMLAMFLIGLAWIVVFYV) and 60–80 (ALDNWNIVVGFGFIAAGFGVS).

It belongs to the CrgA family.

It localises to the cell membrane. In terms of biological role, involved in cell division. Coordinates growth and cell division. Required for the formation of the sporulation septa. This Streptomyces avermitilis (strain ATCC 31267 / DSM 46492 / JCM 5070 / NBRC 14893 / NCIMB 12804 / NRRL 8165 / MA-4680) protein is Cell division protein CrgA.